A 129-amino-acid chain; its full sequence is MAKPGTRTRKKVKKTVVDGVAHIHASFNNTIVTITDRQGNALSWATSGGSGFRGSRKSTPFAAQVAAERAGNAAAEYGLKNLDVLVKGPGPGRESAIRALNACGYKITNITDVTPIPHNGCRPPKKRRV.

Belongs to the universal ribosomal protein uS11 family. Part of the 30S ribosomal subunit. Interacts with proteins S7 and S18. Binds to IF-3.

Its function is as follows. Located on the platform of the 30S subunit, it bridges several disparate RNA helices of the 16S rRNA. Forms part of the Shine-Dalgarno cleft in the 70S ribosome. The protein is Small ribosomal subunit protein uS11 of Hahella chejuensis (strain KCTC 2396).